The sequence spans 228 residues: Phosphoglycolate phosphatase (228 aa).

The active-site Nucleophile is the aspartate 12. Mg(2+) is bound by residues aspartate 12, aspartate 14, and aspartate 177.

The protein belongs to the HAD-like hydrolase superfamily. CbbY/CbbZ/Gph/YieH family. Mg(2+) is required as a cofactor.

It carries out the reaction 2-phosphoglycolate + H2O = glycolate + phosphate. The protein operates within organic acid metabolism; glycolate biosynthesis; glycolate from 2-phosphoglycolate: step 1/1. Its function is as follows. Specifically catalyzes the dephosphorylation of 2-phosphoglycolate. Is involved in the dissimilation of the intracellular 2-phosphoglycolate formed during the DNA repair of 3'-phosphoglycolate ends, a major class of DNA lesions induced by oxidative stress. This chain is Phosphoglycolate phosphatase, found in Vibrio parahaemolyticus serotype O3:K6 (strain RIMD 2210633).